Here is a 139-residue protein sequence, read N- to C-terminus: MANSASGLAVNDECKFKFQELKTRRGFRFIVFKIDDKAMEIKVERLGQTAEGYEDFAATLPADECRYAVYDLDFVTDENCQKSKIFFFSWSPDTARTRSKMLYASSKDRFRRELDGIQCEIQATDPSEMSLDIIRARAH.

The ADF-H domain maps to 7 to 139; sequence GLAVNDECKF…SLDIIRARAH (133 aa).

It belongs to the actin-binding proteins ADF family.

In terms of biological role, actin-depolymerizing protein. Severs actin filaments (F-actin) and binds to actin monomers. The protein is Actin-depolymerizing factor 9 (ADF9) of Oryza sativa subsp. japonica (Rice).